A 658-amino-acid polypeptide reads, in one-letter code: Gametogenetin (658 aa).

2 disordered regions span residues 1-268 (MGNV…ASGG) and 285-584 (KQGP…SNKG). A compositionally biased stretch (basic and acidic residues) spans 14–30 (SRKEQASDRASDSRRTP). The span at 54-83 (PGSSGPPGLLIPPESQASSSTLPLTLELPS) shows a compositional bias: low complexity. Residues 127-491 (RGLLEASHRG…APTPPSTLSP (365 aa)) are interaction with GGNBP1. The segment covering 163–188 (PAPPPTPLEPRKQLPPAPSTCDPQPP) has biased composition (pro residues). The segment covering 194–204 (LASSATSPTES) has biased composition (polar residues). Low complexity predominate over residues 252–264 (SSSGPLAAKASLG). Ser-384 bears the Phosphoserine mark. Residues 398 to 409 (PRRPTPALLAPP) show a composition bias toward low complexity. Residues 423–460 (RPVPPSPQQIPPLPPPPPTPPATPPPAPPPTPQPPALP) show a composition bias toward pro residues. Residues 489–516 (LSPTAAAEQAPAPTPAPVTSQVPATTTA) are compositionally biased toward low complexity. An interactions with ZNF403/GGNBP2 and OAZ3 region spans residues 496 to 658 (EQAPAPTPAP…HYDLQATHST (163 aa)). The segment covering 527–536 (IRTRRNKGPR) has biased composition (basic residues).

As to quaternary structure, interacts with FANCL, GGNBP1 and ZNF403/GGNBP2.

May be involved in spermatogenesis. The chain is Gametogenetin (Ggn) from Rattus norvegicus (Rat).